A 443-amino-acid chain; its full sequence is Mitochondrial distribution and morphology protein 10 (443 aa).

This sequence belongs to the MDM10 family. Component of the ER-mitochondria encounter structure (ERMES) or MDM complex, composed of MMM1, MDM10, MDM12 and MDM34. Associates with the mitochondrial outer membrane sorting assembly machinery SAM(core) complex.

The protein localises to the mitochondrion outer membrane. In terms of biological role, component of the ERMES/MDM complex, which serves as a molecular tether to connect the endoplasmic reticulum and mitochondria. Components of this complex are involved in the control of mitochondrial shape and protein biogenesis and may function in phospholipid exchange. MDM10 is involved in the late assembly steps of the general translocase of the mitochondrial outer membrane (TOM complex). Functions in the TOM40-specific route of the assembly of outer membrane beta-barrel proteins, including the association of TOM40 with the receptor TOM22 and small TOM proteins. Can associate with the SAM(core) complex as well as the MDM12-MMM1 complex, both involved in late steps of the major beta-barrel assembly pathway, that is responsible for biogenesis of all outer membrane beta-barrel proteins. May act as a switch that shuttles between both complexes and channels precursor proteins into the TOM40-specific pathway. Plays a role in mitochondrial morphology and in the inheritance of mitochondria. The protein is Mitochondrial distribution and morphology protein 10 of Pyricularia oryzae (strain 70-15 / ATCC MYA-4617 / FGSC 8958) (Rice blast fungus).